The chain runs to 71 residues: Stathmin-1-B (71 aa).

Residues 1–67 are a coiled coil; sequence KREHEKEVLQ…EIRKGKECKE (67 aa). Residues 1-71 form the SLD domain; sequence KREHEKEVLQ…GKECKEPSED (71 aa).

Belongs to the stathmin family. Binds to two alpha/beta-tubulin heterodimers. Post-translationally, from unphosphorylated forms to highly phosphorylated ones in the mature egg, followed by progressive dephosphorylation from the mid-blastula to the tailbud stage. In terms of tissue distribution, ubiquitous. Mostly abundant in brain and oocytes.

It is found in the cytoplasm. The protein resides in the cytoskeleton. Functionally, involved in the regulation of the microtubule (MT) filament system by destabilizing microtubules. It prevents assembly and promotes disassembly of microtubules. The protein is Stathmin-1-B (stmn1-b) of Xenopus laevis (African clawed frog).